The sequence spans 55 residues: Sporulation killing factor (55 aa).

Positions 1–29 are excised as a propeptide; that stretch reads MKRNQKEWESVSKKGLMKPGGTSIVKAAG. An intrachain disulfide couples Cys-30 to Cys-45. A cross-link (cyclopeptide (Cys-Ile)) is located at residues 30–55; sequence CMGCWASKSIAMTRVCALPHPAMRAI. Positions 33 to 41 form a cross-link, 2-(S-cysteinyl)-methionine (Cys-Met); it reads CWASKSIAM.

This is a cyclic peptide. The first step in SKF maturation is probably thioether bond formation.

The protein resides in the secreted. Its function is as follows. Produces a 26-residue extracellular sporulation killing factor (SKF) that induces the lysis of other B.subtilis cells that have not entered the sporulation pathway, providing a source of nutrients to support sporulation, and at the same time delaying commitment to the energetically expensive and irreversible onset of sporulation. Can also inhibit growth of other bacteria at high concentrations. Addition of SKF to solid cultures induces killing, but it is much less effective than SDP (AC O34344). Has a role in protecting the secreted lipase LipA against proteolysis, either by modulating its folding or by acting as a protease inhibitor. This Bacillus subtilis (strain 168) protein is Sporulation killing factor.